Consider the following 485-residue polypeptide: Argininosuccinate lyase (485 aa).

This sequence belongs to the lyase 1 family. Argininosuccinate lyase subfamily.

It localises to the cytoplasm. The catalysed reaction is 2-(N(omega)-L-arginino)succinate = fumarate + L-arginine. It functions in the pathway amino-acid biosynthesis; L-arginine biosynthesis; L-arginine from L-ornithine and carbamoyl phosphate: step 3/3. The protein is Argininosuccinate lyase of Halobacterium salinarum (strain ATCC 29341 / DSM 671 / R1).